A 600-amino-acid chain; its full sequence is Adenine deaminase 2 (600 aa).

The protein belongs to the metallo-dependent hydrolases superfamily. Adenine deaminase family. It depends on Mn(2+) as a cofactor.

The enzyme catalyses adenine + H2O + H(+) = hypoxanthine + NH4(+). This chain is Adenine deaminase 2, found in Bradyrhizobium sp. (strain ORS 278).